Reading from the N-terminus, the 581-residue chain is Arginine--tRNA ligase (581 aa).

A 'HIGH' region motif is present at residues 126 to 136 (PNLAKEMHVGH).

Belongs to the class-I aminoacyl-tRNA synthetase family. Monomer.

The protein resides in the cytoplasm. The enzyme catalyses tRNA(Arg) + L-arginine + ATP = L-arginyl-tRNA(Arg) + AMP + diphosphate. This chain is Arginine--tRNA ligase, found in Shewanella amazonensis (strain ATCC BAA-1098 / SB2B).